The sequence spans 169 residues: Protein YABBY 7 (169 aa).

The C4-type zinc-finger motif lies at 21 to 48 (CSFCATVLLVSVPCSSVLRVVAVQCGHC). The interval 63 to 122 (SASIELTPQELDAGPPPGEYSDESSGDDREGRDAEDDAPAPAAAAVANKPPGRKQRTPSA) is disordered.

Belongs to the YABBY family. As to expression, expressed in leaf sheaths and flowers.

The protein resides in the nucleus. This is Protein YABBY 7 (YAB7) from Oryza sativa subsp. japonica (Rice).